The chain runs to 193 residues: MIRCGLACERCRWILPLLLLSAIAFDIIALAGRGWLQSSDHGQTSSLWWKCSQEGGGSGSYEEGCQSLMEYAWGRAAAAMLFCGFIILVICFILSFFALCGPQMLVFLRVIGGLLALAAVFQIISLVIYPVKYTQTFTLHANPAVTYIYNWAYGFGWAATIILIGCAFFFCCLPNYEDDLLGNAKPRYFYTSA.

Helical transmembrane passes span 12 to 32, 79 to 99, 110 to 130, and 151 to 171; these read RWILPLLLLSAIAFDIIALAG, AMLFCGFIILVICFILSFFAL, VIGGLLALAAVFQIISLVIYP, and WAYGFGWAATIILIGCAFFFC.

The protein belongs to the TMEM47 family. As to quaternary structure, (Microbial infection) Interacts with S.typhimurium sipA and sctB1/sipC. In terms of tissue distribution, expressed in skin, heart, placental, liver, pancreas, keratinocytes and dermal fibroblasts. May translocate to the intestinal apical epithelial cell surface via sipA and sctB1/sipC-promoted exocytic translocation following infection by S. Typhimurium.

The protein resides in the cell junction. It localises to the desmosome. The protein localises to the cell membrane. It is found in the cytoplasm. Component of intercellular desmosome junctions. Plays a role in stratified epithelial integrity and cell-cell adhesion by promoting desmosome assembly. Thereby plays a role in barrier function of the skin against infection. Plays a role in mammary epithelial tissue homeostasis and remodeling during and after pregnancy, potentially via its involvement in desmosome cell-cell junctions. Required for tooth enamel development via facilitating desmosome-mediated ameloblast adhesion to the stratum intermedium during the transitional stage of amelogenesis. May also play a role in downstream transcriptional regulation of other genes involved in amelogenesis such as AMBN, ENAM, MMP20 and KLK4. Plays a role as an effector in the TP53-dependent apoptotic pathway. Positively regulates apoptosis in T-helper 17 (Th17) cell populations via caspase-dependent signaling. Promotes neutrophil transepithelial migration in response to chemoattractants such as hepoxilin A3 (HXA3), N-Formylmethionyl-leucyl-phenylalanine (fMLP) and CXCL8/IL-8. Required for neutrophil transepithelial migration in response to S.typhimurium infection. May act as a positive regulator of endothelial cell apoptosis in response to blood flow-derived shear stress. The chain is p53 apoptosis effector related to PMP-22 from Homo sapiens (Human).